Consider the following 122-residue polypeptide: Large ribosomal subunit protein uL14 (122 aa).

It belongs to the universal ribosomal protein uL14 family. In terms of assembly, part of the 50S ribosomal subunit. Forms a cluster with proteins L3 and L19. In the 70S ribosome, L14 and L19 interact and together make contacts with the 16S rRNA in bridges B5 and B8.

Functionally, binds to 23S rRNA. Forms part of two intersubunit bridges in the 70S ribosome. The chain is Large ribosomal subunit protein uL14 from Chlorobium phaeovibrioides (strain DSM 265 / 1930) (Prosthecochloris vibrioformis (strain DSM 265)).